We begin with the raw amino-acid sequence, 24 residues long: Poly-His-poly-Gly peptide 1 (24 aa).

The span at 1-13 shows a compositional bias: basic residues; the sequence is EDDHHHHHHHHHG. Residues 1-24 are disordered; the sequence is EDDHHHHHHHHHGVGGGGGGGGGG. The segment covering 14–24 has biased composition (gly residues); that stretch reads VGGGGGGGGGG.

As to expression, expressed by the venom gland.

It is found in the secreted. May serve as a metalloproteinase inhibitor during glandular storage. Their inhibition may be instantly disengaged, by dilution or physiochemical change, when venom is injected into tissue of the victim. The polypeptide is Poly-His-poly-Gly peptide 1 (Atheris chlorechis (Western bush viper)).